The chain runs to 398 residues: Acetate kinase 1 (398 aa).

Asn-10 contributes to the Mg(2+) binding site. Lys-17 provides a ligand contact to ATP. Arg-89 is a substrate binding site. Asp-146 (proton donor/acceptor) is an active-site residue. ATP is bound by residues 206–210, 281–283, and 329–333; these read HLGNG, DCR, and GIGEN. Residue Glu-384 coordinates Mg(2+).

Belongs to the acetokinase family. As to quaternary structure, homodimer. Requires Mg(2+) as cofactor. It depends on Mn(2+) as a cofactor.

Its subcellular location is the cytoplasm. The catalysed reaction is acetate + ATP = acetyl phosphate + ADP. The protein operates within metabolic intermediate biosynthesis; acetyl-CoA biosynthesis; acetyl-CoA from acetate: step 1/2. Its function is as follows. Catalyzes the formation of acetyl phosphate from acetate and ATP. Can also catalyze the reverse reaction. The protein is Acetate kinase 1 of Neisseria meningitidis serogroup B (strain ATCC BAA-335 / MC58).